A 231-amino-acid chain; its full sequence is 6-hydroxymethyl-7,8-dihydropterin pyrophosphokinase (231 aa).

Belongs to the archaeal 6-HMPDK family. Mg(2+) is required as a cofactor.

The catalysed reaction is 6-hydroxymethyl-7,8-dihydropterin + ATP = (7,8-dihydropterin-6-yl)methyl diphosphate + AMP + H(+). Catalyzes the transfer of diphosphate from ATP to 6-hydroxymethyl-7,8-dihydropterin (6-HMD), leading to 6-hydroxymethyl-7,8-dihydropterin diphosphate (6-HMDP). To a lesser extent, can also use CTP, UTP, and GTP as the nucleotide triphosphate substrate. This is 6-hydroxymethyl-7,8-dihydropterin pyrophosphokinase from Pyrococcus furiosus (strain ATCC 43587 / DSM 3638 / JCM 8422 / Vc1).